A 489-amino-acid chain; its full sequence is Alpha-amylase (489 aa).

The N-terminal stretch at 1–16 is a signal peptide; sequence HFKPILVLCLATLALG. Residues Cys44 and Cys102 are joined by a disulfide bond. 3 residues coordinate Ca(2+): Asn116, Arg164, and Asp173. A disulfide bridge connects residues Cys152 and Cys166. Position 201 (Arg201) interacts with chloride. Asp203 serves as the catalytic Nucleophile. His207 lines the Ca(2+) pocket. Glu240 acts as the Proton donor in catalysis. Chloride contacts are provided by Asn303 and Arg339. 2 cysteine pairs are disulfide-bonded: Cys372-Cys378 and Cys443-Cys455.

The protein belongs to the glycosyl hydrolase 13 family. As to quaternary structure, monomer. Ca(2+) serves as cofactor. Chloride is required as a cofactor.

It carries out the reaction Endohydrolysis of (1-&gt;4)-alpha-D-glucosidic linkages in polysaccharides containing three or more (1-&gt;4)-alpha-linked D-glucose units.. The polypeptide is Alpha-amylase (Tribolium castaneum (Red flour beetle)).